Reading from the N-terminus, the 622-residue chain is Low affinity potassium transport system protein Kup (622 aa).

Helical transmembrane passes span 9-29 (LPAI…TSPL), 49-69 (VFGF…IKYL), 103-123 (VIMG…TPAI), 137-157 (PQLD…LFMI), 165-185 (VGKL…GLGL), 213-233 (VSFI…ALYA), 247-267 (WFTV…ALLL), 276-296 (PFFL…AALA), 337-357 (IYIP…IVSF), 363-383 (LAAA…ILST), 396-416 (FVAL…TANL), and 419-439 (LLSG…VMTT).

This sequence belongs to the HAK/KUP transporter (TC 2.A.72) family.

Its subcellular location is the cell inner membrane. It catalyses the reaction K(+)(in) + H(+)(in) = K(+)(out) + H(+)(out). Responsible for the low-affinity transport of potassium into the cell. Likely operates as a K(+):H(+) symporter. The chain is Low affinity potassium transport system protein Kup from Shigella boydii serotype 18 (strain CDC 3083-94 / BS512).